A 269-amino-acid polypeptide reads, in one-letter code: Shikimate dehydrogenase (NADP(+)) (269 aa).

Shikimate contacts are provided by residues Ser15–Ser17 and Thr62. Lys66 serves as the catalytic Proton acceptor. 2 residues coordinate shikimate: Asn86 and Asp99. NADP(+) is bound by residues Gly123 to Ala127, Asn146 to Lys151, and Leu213. Tyr215 is a shikimate binding site. Gly236 contributes to the NADP(+) binding site.

It belongs to the shikimate dehydrogenase family. As to quaternary structure, homodimer.

The enzyme catalyses shikimate + NADP(+) = 3-dehydroshikimate + NADPH + H(+). It functions in the pathway metabolic intermediate biosynthesis; chorismate biosynthesis; chorismate from D-erythrose 4-phosphate and phosphoenolpyruvate: step 4/7. Involved in the biosynthesis of the chorismate, which leads to the biosynthesis of aromatic amino acids. Catalyzes the reversible NADPH linked reduction of 3-dehydroshikimate (DHSA) to yield shikimate (SA). This is Shikimate dehydrogenase (NADP(+)) from Methanocella arvoryzae (strain DSM 22066 / NBRC 105507 / MRE50).